A 307-amino-acid polypeptide reads, in one-letter code: Elongation factor Ts (307 aa).

The tract at residues 79–82 is involved in Mg(2+) ion dislocation from EF-Tu; the sequence is TDFV.

Belongs to the EF-Ts family.

It localises to the cytoplasm. Associates with the EF-Tu.GDP complex and induces the exchange of GDP to GTP. It remains bound to the aminoacyl-tRNA.EF-Tu.GTP complex up to the GTP hydrolysis stage on the ribosome. This Bartonella quintana (strain Toulouse) (Rochalimaea quintana) protein is Elongation factor Ts (tsf).